The chain runs to 185 residues: MMTHLRPALASLLALSLLTGVAYPLALTGIAAVIAPDRAAGSLILREGQVVGSALIGQGFEGPGYLHPRPSASDWNAAGTSASNLGPTSAALLAQVQERQAAYEAQNGASAPVDAVTASGSGLDPHVSPANARAQAGRIARARGLEEAAVRRLIEAHVEPPLLGLWGQARVNVLAVNLALDAAGA.

The helical transmembrane segment at 14–34 threads the bilayer; that stretch reads ALSLLTGVAYPLALTGIAAVI.

The protein belongs to the KdpC family. As to quaternary structure, the system is composed of three essential subunits: KdpA, KdpB and KdpC.

It localises to the cell inner membrane. Functionally, part of the high-affinity ATP-driven potassium transport (or Kdp) system, which catalyzes the hydrolysis of ATP coupled with the electrogenic transport of potassium into the cytoplasm. This subunit acts as a catalytic chaperone that increases the ATP-binding affinity of the ATP-hydrolyzing subunit KdpB by the formation of a transient KdpB/KdpC/ATP ternary complex. The sequence is that of Potassium-transporting ATPase KdpC subunit from Cereibacter sphaeroides (strain KD131 / KCTC 12085) (Rhodobacter sphaeroides).